Here is an 820-residue protein sequence, read N- to C-terminus: 1,4-alpha-glucan-branching enzyme, chloroplastic/amyloplastic (820 aa).

The segment covering 1–20 has biased composition (low complexity); the sequence is MLCLTSSSSSAPAPLLPSLA. The tract at residues 1–28 is disordered; it reads MLCLTSSSSSAPAPLLPSLADRPSPGIA. The N-terminal 64 residues, 1–64, are a transit peptide targeting the chloroplast; that stretch reads MLCLTSSSSS…SVPATARKNK (64 aa). Positions 153 and 188 each coordinate (1,4-alpha-D-glucosyl)n. Aspartate 409 acts as the Nucleophile in catalysis. Glutamate 464 acts as the Proton donor in catalysis.

Belongs to the glycosyl hydrolase 13 family. GlgB subfamily. In terms of assembly, monomer.

It is found in the plastid. The protein resides in the chloroplast. It localises to the amyloplast. It catalyses the reaction Transfers a segment of a (1-&gt;4)-alpha-D-glucan chain to a primary hydroxy group in a similar glucan chain.. The protein operates within glycan biosynthesis; starch biosynthesis. Its function is as follows. Catalyzes the formation of the alpha-1,6-glucosidic linkages in starch by scission of a 1,4-alpha-linked oligosaccharide from growing alpha-1,4-glucan chains and the subsequent attachment of the oligosaccharide to the alpha-1,6 position. The chain is 1,4-alpha-glucan-branching enzyme, chloroplastic/amyloplastic (SBE1) from Oryza sativa subsp. japonica (Rice).